A 324-amino-acid chain; its full sequence is Lactonase drp35 (324 aa).

Residues E47, S109, G111, D129, T132, Y134, D137, N184, D235, and S236 each coordinate Ca(2+). D235 functions as the Proton donor in the catalytic mechanism.

Belongs to the SMP-30/CGR1 family. Requires Ca(2+) as cofactor.

The protein resides in the cytoplasm. Functionally, exhibits lactonase activity. Acts in cells with perturbed membrane integrity and is possibly related to the membrane homeostasis. The chain is Lactonase drp35 (drp35) from Staphylococcus aureus (strain MW2).